The sequence spans 262 residues: Zinc finger protein ehn-3 (262 aa).

4 consecutive C2H2-type zinc fingers follow at residues 2–24, 30–52, 59–84, and 92–115; these read EKCDICHQKFSNKTNLNRHKVMH, FECQFCRRPFFRNDRMKEHMMTH, FECPITACNSKFNSFTSLQFHVDSEH, and AKCKSCIKWFNSSHRLLLHFHTAH. The interval 179–204 is disordered; the sequence is SVKSAKELSPTPSTEIETPEEEELDG. Over residues 185–194 the composition is skewed to low complexity; it reads ELSPTPSTEI. Over residues 195-204 the composition is skewed to acidic residues; that stretch reads ETPEEEELDG. C2H2-type zinc fingers lie at residues 208–230 and 236–260; these read WYCDYCKIRFDDKVMWYLHSGLH and FKCSLCGSLCDGKYDFAAHLVYANH.

The protein belongs to the krueppel C2H2-type zinc-finger protein family.

The protein localises to the nucleus. Its function is as follows. Together with the zinc finger protein ztf-16, plays a role in gonadogenesis, specifically in somatic gonad precursor cell development. This is possibly by regulating tra-1 gene expression. In terms of biological role, required for proper gonadal primordium assembly and somatic gonad precursor cell morphology. The polypeptide is Zinc finger protein ehn-3 (Caenorhabditis elegans).